A 237-amino-acid polypeptide reads, in one-letter code: tRNA1(Val) (adenine(37)-N6)-methyltransferase (237 aa).

This sequence belongs to the methyltransferase superfamily. tRNA (adenine-N(6)-)-methyltransferase family.

It is found in the cytoplasm. It carries out the reaction adenosine(37) in tRNA1(Val) + S-adenosyl-L-methionine = N(6)-methyladenosine(37) in tRNA1(Val) + S-adenosyl-L-homocysteine + H(+). Its function is as follows. Specifically methylates the adenine in position 37 of tRNA(1)(Val) (anticodon cmo5UAC). The protein is tRNA1(Val) (adenine(37)-N6)-methyltransferase of Bacteroides fragilis (strain ATCC 25285 / DSM 2151 / CCUG 4856 / JCM 11019 / LMG 10263 / NCTC 9343 / Onslow / VPI 2553 / EN-2).